Here is a 295-residue protein sequence, read N- to C-terminus: Small ribosomal subunit protein uS2 (295 aa).

Residue Ser2 is modified to N-acetylserine. Residue Ser43 is modified to Phosphoserine. N6-acetyllysine is present on Lys52. The interval 54–113 is interaction with PPP1R16B; sequence TWEKLLLAARAIVAIENPADVSVISSRNTGQRAVLKFAAATGATPIAGRFTPGTFTNQIQ. Lys89 is subject to N6-acetyllysine; alternate. Lys89 participates in a covalent cross-link: Glycyl lysine isopeptide (Lys-Gly) (interchain with G-Cter in SUMO2); alternate. At Thr97 the chain carries Phosphothreonine. Laminin-binding stretches follow at residues 161–180 and 205–229; these read IPCNNKGAHSVGLMWWMLAR and RDPEEIEKEEQAAAEKAVTKEEFQG. [DE]-W-[ST] repeat units lie at residues 230-232, 247-249, 266-268, 275-277, and 293-295; these read EWT, DWS, and EWS. Residues 242–295 are laminin-binding; it reads QPEVADWSEGVQVPSVPIQQFPTEDWSAQPATEDWSAAPTAQATEWVGTTTEWS. The tract at residues 266–295 is disordered; sequence DWSAQPATEDWSAAPTAQATEWVGTTTEWS. Residues 280–295 are compositionally biased toward polar residues; sequence PTAQATEWVGTTTEWS.

The protein belongs to the universal ribosomal protein uS2 family. As to quaternary structure, monomer (37LRP) and homodimer (67LR). Component of the small ribosomal subunit. Mature ribosomes consist of a small (40S) and a large (60S) subunit. The 40S subunit contains about 33 different proteins and 1 molecule of RNA (18S). The 60S subunit contains about 49 different proteins and 3 molecules of RNA (28S, 5.8S and 5S). Interacts with RPS21. Interacts with several laminins including at least LAMB1. Interacts with MDK. The mature dimeric form interacts with PPP1R16B (via its fourth ankyrin repeat). Interacts with PPP1CA only in the presence of PPP1R16B. Post-translationally, acylated. Acylation may be a prerequisite for conversion of the monomeric 37 kDa laminin receptor precursor (37LRP) to the mature dimeric 67 kDa laminin receptor (67LR), and may provide a mechanism for membrane association. Cleaved by stromelysin-3 (ST3) at the cell surface. Cleavage by stromelysin-3 may be a mechanism to alter cell-extracellular matrix interactions.

Its subcellular location is the cell membrane. The protein localises to the cytoplasm. It localises to the nucleus. Its function is as follows. Required for the assembly and/or stability of the 40S ribosomal subunit. Required for the processing of the 20S rRNA-precursor to mature 18S rRNA in a late step of the maturation of 40S ribosomal subunits. Also functions as a cell surface receptor for laminin. Plays a role in cell adhesion to the basement membrane and in the consequent activation of signaling transduction pathways. May play a role in cell fate determination and tissue morphogenesis. Also acts as a receptor for several other ligands, including the pathogenic prion protein, viruses, and bacteria. Acts as a PPP1R16B-dependent substrate of PPP1CA. The polypeptide is Small ribosomal subunit protein uS2 (Oryctolagus cuniculus (Rabbit)).